Reading from the N-terminus, the 799-residue chain is Putative aconitate hydratase, mitochondrial (799 aa).

Residues 1 to 32 (MVRQLVWQRATASRRLAPKCLSPQQLFARRGL) constitute a mitochondrion transit peptide. Substrate-binding positions include Q108 and 201-203 (DSH). The [4Fe-4S] cluster site is built by C399, C462, and C465. R489 and R494 together coordinate substrate. The tract at residues 538 to 564 (KFRPPQGSDLPSAGFADGNPALQPSAG) is disordered. 685–686 (AR) contacts substrate.

This sequence belongs to the aconitase/IPM isomerase family.

It localises to the mitochondrion. Functionally, has no detectable activity towards cis-acontiate or cis-homoaconitate. The chain is Putative aconitate hydratase, mitochondrial (acoB) from Aspergillus fumigatus (strain ATCC MYA-4609 / CBS 101355 / FGSC A1100 / Af293) (Neosartorya fumigata).